We begin with the raw amino-acid sequence, 437 residues long: Methylenetetrahydrofolate--tRNA-(uracil-5-)-methyltransferase TrmFO (437 aa).

10-15 provides a ligand contact to FAD; it reads GGGLAG.

It belongs to the MnmG family. TrmFO subfamily. It depends on FAD as a cofactor.

The protein localises to the cytoplasm. It carries out the reaction uridine(54) in tRNA + (6R)-5,10-methylene-5,6,7,8-tetrahydrofolate + NADH + H(+) = 5-methyluridine(54) in tRNA + (6S)-5,6,7,8-tetrahydrofolate + NAD(+). The enzyme catalyses uridine(54) in tRNA + (6R)-5,10-methylene-5,6,7,8-tetrahydrofolate + NADPH + H(+) = 5-methyluridine(54) in tRNA + (6S)-5,6,7,8-tetrahydrofolate + NADP(+). Functionally, catalyzes the folate-dependent formation of 5-methyl-uridine at position 54 (M-5-U54) in all tRNAs. The protein is Methylenetetrahydrofolate--tRNA-(uracil-5-)-methyltransferase TrmFO of Geotalea daltonii (strain DSM 22248 / JCM 15807 / FRC-32) (Geobacter daltonii).